The sequence spans 1117 residues: Protocadherin-11 X-linked (1117 aa).

A signal peptide spans 1 to 23 (MDLLSGTHIFAVLLACIVFQSGA). The Extracellular portion of the chain corresponds to 24-812 (QEKNYTIREE…ASSPSSDYVK (789 aa)). 2 N-linked (GlcNAc...) asparagine glycosylation sites follow: asparagine 27 and asparagine 48. 7 Cadherin domains span residues 27–139 (NYTI…APLF), 140–249 (PATV…RPVF), 250–355 (KENE…IPSI), 362–466 (NPIN…APVF), 467–570 (TQPF…SPVF), 571–673 (THNE…KPVF), and 677–795 (SSNY…TPVT). Asparagine 344 carries an N-linked (GlcNAc...) asparagine glycan. The N-linked (GlcNAc...) asparagine glycan is linked to asparagine 553. A helical transmembrane segment spans residues 813 to 833 (IVVAIVAGTITVILVIFITAV). Residues 834–1117 (VRCQQSPHLK…DGNSDPESGK (284 aa)) are Cytoplasmic-facing. A compositionally biased stretch (polar residues) spans 1029 to 1039 (TVEIWTHPQPQ). Residues 1029–1117 (TVEIWTHPQP…DGNSDPESGK (89 aa)) are disordered.

Expressed in adrenal gland, brain, heart, kidney, lung, prostate, skeletal muscle, testis and thymus.

Its subcellular location is the cell membrane. Potential calcium-dependent cell-adhesion protein. In Sus scrofa (Pig), this protein is Protocadherin-11 X-linked (PCDH11X).